Consider the following 860-residue polypeptide: DNA mismatch repair protein MutS (860 aa).

Position 607 to 614 (607 to 614 (GPNMSGKS)) interacts with ATP.

The protein belongs to the DNA mismatch repair MutS family.

Its function is as follows. This protein is involved in the repair of mismatches in DNA. It is possible that it carries out the mismatch recognition step. This protein has a weak ATPase activity. This Listeria welshimeri serovar 6b (strain ATCC 35897 / DSM 20650 / CCUG 15529 / CIP 8149 / NCTC 11857 / SLCC 5334 / V8) protein is DNA mismatch repair protein MutS.